A 560-amino-acid chain; its full sequence is uncharacterized protein (560 aa).

5 helical membrane-spanning segments follow: residues 9–29 (LVIT…SFLL), 61–81 (ILVP…KYKI), 136–156 (IGIA…ASMM), 305–325 (SLQI…ASFI), and 442–462 (VVLE…TNFY).

Its subcellular location is the membrane. This is an uncharacterized protein from Saccharomyces cerevisiae (strain ATCC 204508 / S288c) (Baker's yeast).